The following is a 357-amino-acid chain: UDP-N-acetylglucosamine--N-acetylmuramyl-(pentapeptide) pyrophosphoryl-undecaprenol N-acetylglucosamine transferase (357 aa).

Residues 13–15, Asn-125, Arg-161, Ser-189, Ile-243, and Gln-288 contribute to the UDP-N-acetyl-alpha-D-glucosamine site; that span reads TGG.

The protein belongs to the glycosyltransferase 28 family. MurG subfamily.

Its subcellular location is the cell inner membrane. It carries out the reaction di-trans,octa-cis-undecaprenyl diphospho-N-acetyl-alpha-D-muramoyl-L-alanyl-D-glutamyl-meso-2,6-diaminopimeloyl-D-alanyl-D-alanine + UDP-N-acetyl-alpha-D-glucosamine = di-trans,octa-cis-undecaprenyl diphospho-[N-acetyl-alpha-D-glucosaminyl-(1-&gt;4)]-N-acetyl-alpha-D-muramoyl-L-alanyl-D-glutamyl-meso-2,6-diaminopimeloyl-D-alanyl-D-alanine + UDP + H(+). It functions in the pathway cell wall biogenesis; peptidoglycan biosynthesis. In terms of biological role, cell wall formation. Catalyzes the transfer of a GlcNAc subunit on undecaprenyl-pyrophosphoryl-MurNAc-pentapeptide (lipid intermediate I) to form undecaprenyl-pyrophosphoryl-MurNAc-(pentapeptide)GlcNAc (lipid intermediate II). The polypeptide is UDP-N-acetylglucosamine--N-acetylmuramyl-(pentapeptide) pyrophosphoryl-undecaprenol N-acetylglucosamine transferase (Bordetella pertussis (strain Tohama I / ATCC BAA-589 / NCTC 13251)).